The primary structure comprises 354 residues: Ornithine carbamoyltransferase, catabolic (354 aa).

Residues 67-70, glutamine 94, arginine 118, and 145-148 each bind carbamoyl phosphate; these read STRT and HPTQ. Residues asparagine 177, aspartate 241, and 245–246 contribute to the L-ornithine site; that span reads SM. Carbamoyl phosphate is bound by residues 284 to 285 and arginine 329; that span reads CL.

Belongs to the aspartate/ornithine carbamoyltransferase superfamily. OTCase family.

It is found in the cytoplasm. It catalyses the reaction carbamoyl phosphate + L-ornithine = L-citrulline + phosphate + H(+). The protein operates within amino-acid degradation; L-arginine degradation via ADI pathway; carbamoyl phosphate from L-arginine: step 2/2. Its function is as follows. Reversibly catalyzes the transfer of the carbamoyl group from carbamoyl phosphate (CP) to the N(epsilon) atom of ornithine (ORN) to produce L-citrulline. This is Ornithine carbamoyltransferase, catabolic (arcB) from Lactococcus lactis subsp. cremoris (strain MG1363).